A 391-amino-acid chain; its full sequence is 8-amino-7-oxononanoate synthase (391 aa).

Position 24 (Arg24) interacts with substrate. 112–113 (GY) is a binding site for pyridoxal 5'-phosphate. His137 contributes to the substrate binding site. Residues Ser183, His211, and Thr240 each contribute to the pyridoxal 5'-phosphate site. Lys243 carries the N6-(pyridoxal phosphate)lysine modification. Thr357 provides a ligand contact to substrate.

This sequence belongs to the class-II pyridoxal-phosphate-dependent aminotransferase family. BioF subfamily. In terms of assembly, homodimer. It depends on pyridoxal 5'-phosphate as a cofactor.

The catalysed reaction is 6-carboxyhexanoyl-[ACP] + L-alanine + H(+) = (8S)-8-amino-7-oxononanoate + holo-[ACP] + CO2. The protein operates within cofactor biosynthesis; biotin biosynthesis. Its function is as follows. Catalyzes the decarboxylative condensation of pimeloyl-[acyl-carrier protein] and L-alanine to produce 8-amino-7-oxononanoate (AON), [acyl-carrier protein], and carbon dioxide. In Alkalilimnicola ehrlichii (strain ATCC BAA-1101 / DSM 17681 / MLHE-1), this protein is 8-amino-7-oxononanoate synthase.